Reading from the N-terminus, the 730-residue chain is Meiotically up-regulated gene 70 protein (730 aa).

Positions 1–27 (MTVGTLSVVSSTASDTASHVSDTRKRQ) are disordered. A compositionally biased stretch (low complexity) spans 7–20 (SVVSSTASDTASHV). CBS domains lie at 69 to 127 (ALDP…LNAR), 135 to 200 (MSTS…RIAR), 263 to 319 (SSEE…GLDP), and 328 to 385 (MTPH…PEEE). 2 helical membrane-spanning segments follow: residues 290–310 (AVLV…DVVL) and 358–378 (VVDE…ATAI). The disordered stretch occupies residues 420-517 (ENYDVNPPLP…ENGSNSFAAS (98 aa)). Polar residues-rich tracts occupy residues 458 to 470 (AWQN…NNKP) and 480 to 515 (YNFS…NSFA). The PB1 domain occupies 572-649 (PSQFTIKYRS…ARRRGLPRLE (78 aa)). A helical membrane pass occupies residues 706–726 (PIYIGIVSSSIVILAVSMWYL).

Its subcellular location is the cytoplasm. The protein resides in the nucleus membrane. In terms of biological role, has a role in meiosis. The protein is Meiotically up-regulated gene 70 protein (mug70) of Schizosaccharomyces pombe (strain 972 / ATCC 24843) (Fission yeast).